The chain runs to 599 residues: Elongation factor 4 (599 aa).

One can recognise a tr-type G domain in the interval K2–Q184. Residues D14 to T19 and N131 to D134 contribute to the GTP site.

The protein belongs to the TRAFAC class translation factor GTPase superfamily. Classic translation factor GTPase family. LepA subfamily.

It is found in the cell inner membrane. The enzyme catalyses GTP + H2O = GDP + phosphate + H(+). Its function is as follows. Required for accurate and efficient protein synthesis under certain stress conditions. May act as a fidelity factor of the translation reaction, by catalyzing a one-codon backward translocation of tRNAs on improperly translocated ribosomes. Back-translocation proceeds from a post-translocation (POST) complex to a pre-translocation (PRE) complex, thus giving elongation factor G a second chance to translocate the tRNAs correctly. Binds to ribosomes in a GTP-dependent manner. This chain is Elongation factor 4, found in Salmonella arizonae (strain ATCC BAA-731 / CDC346-86 / RSK2980).